Reading from the N-terminus, the 240-residue chain is Large ribosomal subunit protein bL25 (240 aa).

Residues 1–23 (MATVKELKATARPKAGKGAARAE) form a disordered region. Over residues 10-19 (TARPKAGKGA) the composition is skewed to low complexity.

Belongs to the bacterial ribosomal protein bL25 family. CTC subfamily. As to quaternary structure, part of the 50S ribosomal subunit; part of the 5S rRNA/L5/L18/L25 subcomplex. Contacts the 5S rRNA. Binds to the 5S rRNA independently of L5 and L18.

In terms of biological role, this is one of the proteins that binds to the 5S RNA in the ribosome where it forms part of the central protuberance. The chain is Large ribosomal subunit protein bL25 from Afipia carboxidovorans (strain ATCC 49405 / DSM 1227 / KCTC 32145 / OM5) (Oligotropha carboxidovorans).